The sequence spans 385 residues: Chorismate synthase (385 aa).

The interval 43–63 (PDLDRRRPGTSRHVTQRNEPD) is disordered. Arginine 48 and arginine 54 together coordinate NADP(+). FMN contacts are provided by residues 125–127 (RSS), 238–239 (NA), glycine 278, 293–297 (KPTSS), and arginine 319. Low complexity predominate over residues 363–372 (AQAPRTETAP). The tract at residues 363–385 (AQAPRTETAPATPPLDAGDDIEA) is disordered.

The protein belongs to the chorismate synthase family. In terms of assembly, homotetramer. FMNH2 is required as a cofactor.

It catalyses the reaction 5-O-(1-carboxyvinyl)-3-phosphoshikimate = chorismate + phosphate. The protein operates within metabolic intermediate biosynthesis; chorismate biosynthesis; chorismate from D-erythrose 4-phosphate and phosphoenolpyruvate: step 7/7. Functionally, catalyzes the anti-1,4-elimination of the C-3 phosphate and the C-6 proR hydrogen from 5-enolpyruvylshikimate-3-phosphate (EPSP) to yield chorismate, which is the branch point compound that serves as the starting substrate for the three terminal pathways of aromatic amino acid biosynthesis. This reaction introduces a second double bond into the aromatic ring system. The polypeptide is Chorismate synthase (Leptothrix cholodnii (strain ATCC 51168 / LMG 8142 / SP-6) (Leptothrix discophora (strain SP-6))).